We begin with the raw amino-acid sequence, 81 residues long: Conotoxin Vc6.7 (81 aa).

A signal peptide spans 1–19; the sequence is MEKLTILLLVAAVLMSIQA. A propeptide spanning residues 20–44 is cleaved from the precursor; sequence VNQEKHQRAKMNLLSKRKPPAERWW. 3 disulfides stabilise this stretch: C49/C63, C56/C67, and C62/C72.

The protein belongs to the conotoxin O2 superfamily. Expressed by the venom duct.

The protein resides in the secreted. In terms of biological role, inhibits voltage-gated ion channels. The sequence is that of Conotoxin Vc6.7 from Conus victoriae (Queen Victoria cone).